The chain runs to 147 residues: Austinoid biosynthesis clusters protein H (147 aa).

The protein belongs to the trt14 isomerase family. In terms of assembly, homodimer.

It participates in secondary metabolite biosynthesis; terpenoid biosynthesis. In terms of biological role, part of the gene cluster B that mediates the biosynthesis of the fungal meroterpenoid acetoxydehydroaustin. The first step of the pathway is the synthesis of 3,5-dimethylorsellinic acid by the polyketide synthase ausA. 3,5-dimethylorsellinic acid is then prenylated by the polyprenyl transferase ausN. Further epoxidation by the FAD-dependent monooxygenase ausM and cyclization by the probable terpene cyclase ausL lead to the formation of protoaustinoid A. Protoaustinoid A is then oxidized to spiro-lactone preaustinoid A3 by the combined action of the FAD-binding monooxygenases ausB and ausC, and the dioxygenase ausE. Acid-catalyzed keto-rearrangement and ring contraction of the tetraketide portion of preaustinoid A3 by ausJ lead to the formation of preaustinoid A4. The aldo-keto reductase ausK, with the help of ausH, is involved in the next step by transforming preaustinoid A4 into isoaustinone which is in turn hydroxylated by the P450 monooxygenase ausI to form austinolide. The cytochrome P450 monooxygenase ausG then modifies austinolide to austinol. Austinol is further acetylated to austin by the O-acetyltransferase ausP, which spontaneously changes to dehydroaustin. The cytochrome P450 monooxygenase then converts dehydroaustin is into 7-dehydrodehydroaustin. The hydroxylation catalyzed by ausR permits the second O-acetyltransferase ausQ to add an additional acetyl group to the molecule, leading to the formation of acetoxydehydroaustin. Due to genetic rearrangements of the clusters and the subsequent loss of some enzymes, the end product of the Penicillium brasilianum austinoid biosynthesis clusters is acetoxydehydroaustin. The chain is Austinoid biosynthesis clusters protein H from Penicillium brasilianum.